A 197-amino-acid chain; its full sequence is Thymidine kinase (197 aa).

Residues 9 to 16 (SAMDAGKT) and 87 to 90 (DEIH) each bind ATP. Catalysis depends on E88, which acts as the Proton acceptor. Zn(2+) is bound by residues C145, C147, C187, and H190.

The protein belongs to the thymidine kinase family. In terms of assembly, homotetramer.

It localises to the cytoplasm. The catalysed reaction is thymidine + ATP = dTMP + ADP + H(+). The polypeptide is Thymidine kinase (Francisella tularensis subsp. tularensis (strain SCHU S4 / Schu 4)).